We begin with the raw amino-acid sequence, 212 residues long: Glutathione S-transferase hmp2 (212 aa).

The 80-residue stretch at 1–80 folds into the GST N-terminal domain; it reads MVIKLYGSAM…YLARKYDSGT (80 aa). Residues 51 to 52 and 64 to 65 each bind glutathione; these read KV and ES. Residues 88–212 enclose the GST C-terminal domain; sequence DHEAYGRFEQ…TWIKATAEAR (125 aa).

It belongs to the GST superfamily.

The enzyme catalyses RX + glutathione = an S-substituted glutathione + a halide anion + H(+). Its pathway is secondary metabolite biosynthesis. Glutathione S-transferase; part of the gene cluster that mediates the biosynthesis of hypothemycin, a resorcylic acid lactone (RAL) that irreversibly inhibits a subset of protein kinases with a conserved cysteine in the ATP binding site such as human ERK2. The first step is performed by both PKSs hmp3 and hmp8 and leads to the production of 7',8'-dehydrozearalenol (DHZ). The highly reducing PKS hpm8 synthesizes the reduced hexaketide (7S,11S,2E,8E)-7,11-dihydroxy-dodeca-2,8-dienoate, which is transferred downstream to the non-reducing PKS hpm3. Hpm3 then extends the reduced hexaketide to a nonaketide, after which regioselective cyclization and macrolactonization affords DHZ. The next step is the conversion of DHZ into aigialomycin C and is performed by the O-methyltransferase hmp5, the FAD-binding monooxygenase hmp7, and the cytochrome P450 monooxygenase hmp1. The wide substrate tolerance of the hmp5 and hmp7 implies that the reactions from DHZ to aigialomycin C can occur in any order. The steps from aigialomycin C to hypothemycin are less well established. The FAD-linked oxidoreductase hmp9 presumably catalyzes oxidation of the C-6' hydroxyl to a ketone. The timing of this oxidation is important, since the resulting enone functional group is a Michael acceptor that can react spontaneously with glutathione, an abundant metabolite in fungal cells. The glutathione S-transferase hmp2 catalyzes cis-trans isomerization of the 7',8' double bond with equilibrium favoring the trans isomer. The hpm6-encoded transporter might preferentially pump hypothemycin out of the cell relative to the trans isomer aigialomycin A. The cis-to-trans isomerization may be coupled with C-4' hydroxylation, since all known hypothemycin analogs containing the enone functional group also have hydroxyl groups at both C-4' and C-5'. The chain is Glutathione S-transferase hmp2 from Hypomyces subiculosus (Nectria subiculosa).